A 246-amino-acid polypeptide reads, in one-letter code: Phosphomannomutase (246 aa).

The Nucleophile role is filled by D13. D13 and D15 together coordinate Mg(2+). D15 (proton donor/acceptor) is an active-site residue. 6 residues coordinate alpha-D-mannose 1-phosphate: R22, R124, R135, R142, S180, and D182. Mg(2+) contacts are provided by D208, Y220, and T225.

The protein belongs to the eukaryotic PMM family. In terms of assembly, homodimer. The cofactor is Mg(2+). In terms of tissue distribution, expressed in roots, stems, leaves, flowers and immature fruits.

It is found in the cytoplasm. The enzyme catalyses alpha-D-mannose 1-phosphate = D-mannose 6-phosphate. It functions in the pathway nucleotide-sugar biosynthesis; GDP-alpha-D-mannose biosynthesis; alpha-D-mannose 1-phosphate from D-fructose 6-phosphate: step 2/2. Catalyzes the interconversion of mannose-6-phosphate to mannose-1-phosphate, the precursor for the synthesis of GDP-mannose. GDP-mannose is an essential sugar nucleotide for the synthesis of D-mannose-containing cell wall polysaccharides (galactomannans and glucomannans), glycolipids, glycoproteins and the antioxidant L-ascorbate. Can complement the yeast temperature-sensitive mutant sec53-6. This chain is Phosphomannomutase, found in Arabidopsis thaliana (Mouse-ear cress).